Reading from the N-terminus, the 434-residue chain is MTGIVEVIGREILDSRGNPTVEVDVILECGAKGRAAVPSGASTGSHEAVELRDEDKGRYLGKGVLKAVNNVNTEIREALLGMDALNQVEIDKVMLELDRTPNKGRLGANAILGVSLAVAKAAAEALGQPLYKYLGGVNSKELPLPMMNILNGGAHADSAVDLQEFMIQPVGAKSFREAMQMGAEVFHHLGKILKANGDSTNVGNEGGYAPSKIQGTEGALALISEAVKAAGYELGKDITFALDAASSEFCKEVNGKYEYHFKREGGVVRTTDEMIKWYEELINKYPIVSIEDGLGEDDWDGWVKLTKAIGDRVQIVGDDLFVTNTERLKKGIELGAGNSILIKLNQIGSLTETLDAIEMAKRAGYTAVVSHRSGETEDATIADVAVATNAGQIKTGSTSRTDRMAKYNQLLRIEEELGSVAQYNGRDVFYNIKK.

Q163 contacts (2R)-2-phosphoglycerate. The active-site Proton donor is the E205. Mg(2+) is bound by residues D243, E291, and D318. Residues K343, R372, S373, and K394 each coordinate (2R)-2-phosphoglycerate. The Proton acceptor role is filled by K343.

The protein belongs to the enolase family. Mg(2+) is required as a cofactor.

The protein localises to the cytoplasm. The protein resides in the secreted. Its subcellular location is the cell surface. It catalyses the reaction (2R)-2-phosphoglycerate = phosphoenolpyruvate + H2O. Its pathway is carbohydrate degradation; glycolysis; pyruvate from D-glyceraldehyde 3-phosphate: step 4/5. Its function is as follows. Catalyzes the reversible conversion of 2-phosphoglycerate (2-PG) into phosphoenolpyruvate (PEP). It is essential for the degradation of carbohydrates via glycolysis. In Fusobacterium nucleatum subsp. nucleatum (strain ATCC 25586 / DSM 15643 / BCRC 10681 / CIP 101130 / JCM 8532 / KCTC 2640 / LMG 13131 / VPI 4355), this protein is Enolase.